The following is a 351-amino-acid chain: Anthranilate phosphoribosyltransferase (351 aa).

Residues G80, 83-84, T88, 90-93, 108-116, and S120 contribute to the 5-phospho-alpha-D-ribose 1-diphosphate site; these read GD, NIST, and KHGNRSVTS. G80 provides a ligand contact to anthranilate. Residue S92 participates in Mg(2+) binding. N111 contacts anthranilate. Anthranilate is bound at residue R166. 2 residues coordinate Mg(2+): D229 and E230.

This sequence belongs to the anthranilate phosphoribosyltransferase family. As to quaternary structure, homodimer. Requires Mg(2+) as cofactor.

It catalyses the reaction N-(5-phospho-beta-D-ribosyl)anthranilate + diphosphate = 5-phospho-alpha-D-ribose 1-diphosphate + anthranilate. The protein operates within amino-acid biosynthesis; L-tryptophan biosynthesis; L-tryptophan from chorismate: step 2/5. Catalyzes the transfer of the phosphoribosyl group of 5-phosphorylribose-1-pyrophosphate (PRPP) to anthranilate to yield N-(5'-phosphoribosyl)-anthranilate (PRA). The chain is Anthranilate phosphoribosyltransferase from Chlorobium limicola (strain DSM 245 / NBRC 103803 / 6330).